The following is a 474-amino-acid chain: Serine--tRNA ligase (474 aa).

L-serine is bound at residue 278–280; it reads TAE. 309–311 provides a ligand contact to ATP; the sequence is RSE. Residue glutamate 332 coordinates L-serine. 396–399 contributes to the ATP binding site; the sequence is EISS. Serine 432 is an L-serine binding site.

It belongs to the class-II aminoacyl-tRNA synthetase family. Type-1 seryl-tRNA synthetase subfamily. In terms of assembly, homodimer. The tRNA molecule binds across the dimer.

It localises to the cytoplasm. The catalysed reaction is tRNA(Ser) + L-serine + ATP = L-seryl-tRNA(Ser) + AMP + diphosphate + H(+). It carries out the reaction tRNA(Sec) + L-serine + ATP = L-seryl-tRNA(Sec) + AMP + diphosphate + H(+). The protein operates within aminoacyl-tRNA biosynthesis; selenocysteinyl-tRNA(Sec) biosynthesis; L-seryl-tRNA(Sec) from L-serine and tRNA(Sec): step 1/1. Functionally, catalyzes the attachment of serine to tRNA(Ser). Is also able to aminoacylate tRNA(Sec) with serine, to form the misacylated tRNA L-seryl-tRNA(Sec), which will be further converted into selenocysteinyl-tRNA(Sec). The protein is Serine--tRNA ligase of Caulobacter sp. (strain K31).